We begin with the raw amino-acid sequence, 194 residues long: dITP/XTP pyrophosphatase (194 aa).

8–13 (TKNKGK) serves as a coordination point for substrate. Residues Glu41 and Asp70 each contribute to the Mg(2+) site. Asp70 functions as the Proton acceptor in the catalytic mechanism. Substrate is bound by residues Ser71, 153–156 (FGYD), Lys176, and 181–182 (HR).

This sequence belongs to the HAM1 NTPase family. In terms of assembly, homodimer. Requires Mg(2+) as cofactor.

The enzyme catalyses XTP + H2O = XMP + diphosphate + H(+). It carries out the reaction dITP + H2O = dIMP + diphosphate + H(+). It catalyses the reaction ITP + H2O = IMP + diphosphate + H(+). In terms of biological role, pyrophosphatase that catalyzes the hydrolysis of nucleoside triphosphates to their monophosphate derivatives, with a high preference for the non-canonical purine nucleotides XTP (xanthosine triphosphate), dITP (deoxyinosine triphosphate) and ITP. Seems to function as a house-cleaning enzyme that removes non-canonical purine nucleotides from the nucleotide pool, thus preventing their incorporation into DNA/RNA and avoiding chromosomal lesions. The protein is dITP/XTP pyrophosphatase of Halalkalibacterium halodurans (strain ATCC BAA-125 / DSM 18197 / FERM 7344 / JCM 9153 / C-125) (Bacillus halodurans).